A 320-amino-acid chain; its full sequence is Phospho-N-acetylmuramoyl-pentapeptide-transferase (320 aa).

A run of 10 helical transmembrane segments spans residues 7-27 (ILAIIISFLIVLIVMPIVIPF), 50-70 (GTPTMGGLVIGLAIIVTSLIF), 77-97 (IGAPLIATVAFGLIGFIDDFI), 113-133 (LVLQFLISITFLYVIQKHLGS), 148-168 (WAYVPVMSVLMVFTVNAVNLT), 173-193 (GLASGVTMIVSLFLAIISIFS), 198-216 (MAIFSGAIVGSCMGFLRYN), 221-241 (VVFMGDTGSLMLGGSIFAIAV), 247-267 (VLVLVIGGLYIIEAVSVMLQV), and 297-317 (VVVVFWIFTILFCLLALAMIQ).

Belongs to the glycosyltransferase 4 family. MraY subfamily. The cofactor is Mg(2+).

The protein localises to the cell membrane. It catalyses the reaction UDP-N-acetyl-alpha-D-muramoyl-L-alanyl-gamma-D-glutamyl-meso-2,6-diaminopimeloyl-D-alanyl-D-alanine + di-trans,octa-cis-undecaprenyl phosphate = di-trans,octa-cis-undecaprenyl diphospho-N-acetyl-alpha-D-muramoyl-L-alanyl-D-glutamyl-meso-2,6-diaminopimeloyl-D-alanyl-D-alanine + UMP. Its pathway is cell wall biogenesis; peptidoglycan biosynthesis. Catalyzes the initial step of the lipid cycle reactions in the biosynthesis of the cell wall peptidoglycan: transfers peptidoglycan precursor phospho-MurNAc-pentapeptide from UDP-MurNAc-pentapeptide onto the lipid carrier undecaprenyl phosphate, yielding undecaprenyl-pyrophosphoryl-MurNAc-pentapeptide, known as lipid I. The chain is Phospho-N-acetylmuramoyl-pentapeptide-transferase from Caldicellulosiruptor bescii (strain ATCC BAA-1888 / DSM 6725 / KCTC 15123 / Z-1320) (Anaerocellum thermophilum).